Reading from the N-terminus, the 150-residue chain is Large ribosomal subunit protein bL9 (150 aa).

It belongs to the bacterial ribosomal protein bL9 family.

Its function is as follows. Binds to the 23S rRNA. This Streptococcus pyogenes serotype M2 (strain MGAS10270) protein is Large ribosomal subunit protein bL9.